A 200-amino-acid polypeptide reads, in one-letter code: Large ribosomal subunit protein uL4 (200 aa).

Residues 38–68 (GRQGSKQQKTRSDVRGGGKRPWRQKGTGRAR) are disordered. Residues 54–65 (GGKRPWRQKGTG) are compositionally biased toward basic residues.

The protein belongs to the universal ribosomal protein uL4 family. As to quaternary structure, part of the 50S ribosomal subunit.

Its function is as follows. One of the primary rRNA binding proteins, this protein initially binds near the 5'-end of the 23S rRNA. It is important during the early stages of 50S assembly. It makes multiple contacts with different domains of the 23S rRNA in the assembled 50S subunit and ribosome. In terms of biological role, forms part of the polypeptide exit tunnel. The protein is Large ribosomal subunit protein uL4 of Pseudomonas savastanoi pv. phaseolicola (strain 1448A / Race 6) (Pseudomonas syringae pv. phaseolicola (strain 1448A / Race 6)).